Here is a 393-residue protein sequence, read N- to C-terminus: Sialyltransferase-like protein 1 (393 aa).

At 1–8 (MKRPLRRP) the chain is on the cytoplasmic side. The helical; Signal-anchor for type II membrane protein transmembrane segment at 9–27 (FAVLLFVVLCAAASFPSVL) threads the bilayer. Topologically, residues 28-393 (RRSVGPAPVL…IAVPPVVFYH (366 aa)) are lumenal. N-linked (GlcNAc...) asparagine glycans are attached at residues Asn-49, Asn-212, and Asn-258.

This sequence belongs to the glycosyltransferase 29 family.

The protein localises to the golgi apparatus membrane. In terms of biological role, possesses sialyltransferase-like activity in vitro. Transfers sialic acid to the oligosaccharide Gal-beta-1,3-GalNAc and to glycoproteins such as asialofetuin, alpha-1-acid glycoprotein (NeuAc-alpha-2,3-Gal-beta-1,3-GalNAc-) and andasialo-alpha-1-acid glycoprotein. The transferred sialic acid is linked to galactose of Gal-beta-1,3-GalNAc through alpha-2,6-linkage. The protein is Sialyltransferase-like protein 1 of Oryza sativa subsp. indica (Rice).